A 129-amino-acid chain; its full sequence is MARKQVSRKRRVKKNIENGVAHIRSTFNNTIVTITDEFGNALSWSSAGALGFKGSKKSTPFAAQMASETASKTAMEHGLKSVEVTVKGPGPGRESAIRALQSAGLEVTAIRDVTPVPHNGCRPPKRRRV.

It belongs to the universal ribosomal protein uS11 family. Part of the 30S ribosomal subunit. Interacts with proteins S7 and S18. Binds to IF-3.

Functionally, located on the platform of the 30S subunit, it bridges several disparate RNA helices of the 16S rRNA. Forms part of the Shine-Dalgarno cleft in the 70S ribosome. The sequence is that of Small ribosomal subunit protein uS11 from Staphylococcus saprophyticus subsp. saprophyticus (strain ATCC 15305 / DSM 20229 / NCIMB 8711 / NCTC 7292 / S-41).